The chain runs to 631 residues: Nucleoside triphosphatase I (631 aa).

One can recognise a Helicase ATP-binding domain in the interval 42 to 204; that stretch reads FLGLDTMHSI…TMIVNLLRPK (163 aa). 55–62 contributes to the ATP binding site; the sequence is HDTGVGKT. Positions 141–144 match the DEXH box motif; sequence DECH. The Helicase C-terminal domain maps to 367 to 536; that stretch reads KFTEVCLKIL…LFKVFKESSI (170 aa). Positions 457–524 are binding to the cap-specific mRNA (nucleoside-2'-O-)-methyltransferase; it reads DIFILDMTWN…NIIKTKSKEF (68 aa).

The protein belongs to the helicase family. NPH I subfamily. Monomer. Interacts (via C-terminus) with RAP94 (via N-terminus). Interacts with the cap-specific mRNA (nucleoside-2'-O-)-methyltransferase.

It is found in the virion. It catalyses the reaction a ribonucleoside 5'-triphosphate + H2O = a ribonucleoside 5'-diphosphate + phosphate + H(+). In terms of biological role, DNA-dependent ATPase required for providing the needed energy to achieve the termination of early transcripts. Acts in concert with the RAP94 subunit of the virion RNA polymerase and the capping enzyme/VTF to catalyze release of UUUUUNU-containing nascent RNA from the elongation complex. NPH-I must bind ssDNA in order to exhibit ATPase activity. The protein is Nucleoside triphosphatase I (NPH1) of Erythrocebus patas (Red guenon).